The chain runs to 60 residues: Conotoxin Cal6.20 (60 aa).

The N-terminal stretch at 1–22 (MKLTCVLIVAVLILTACQVIAA) is a signal peptide. 3 disulfides stabilise this stretch: Cys-32–Cys-42, Cys-35–Cys-48, and Cys-41–Cys-55.

This sequence belongs to the conotoxin O1 superfamily. In terms of tissue distribution, expressed by the venom duct.

The protein resides in the secreted. In terms of biological role, probable neurotoxin. This is Conotoxin Cal6.20 from Californiconus californicus (California cone).